A 205-amino-acid polypeptide reads, in one-letter code: Holliday junction branch migration complex subunit RuvA (205 aa).

Positions Met1–Pro64 are domain I. The interval Ser65–Ala143 is domain II. The segment at Lys144–Thr153 is flexible linker. The domain III stretch occupies residues Thr153 to Arg205.

It belongs to the RuvA family. Homotetramer. Forms an RuvA(8)-RuvB(12)-Holliday junction (HJ) complex. HJ DNA is sandwiched between 2 RuvA tetramers; dsDNA enters through RuvA and exits via RuvB. An RuvB hexamer assembles on each DNA strand where it exits the tetramer. Each RuvB hexamer is contacted by two RuvA subunits (via domain III) on 2 adjacent RuvB subunits; this complex drives branch migration. In the full resolvosome a probable DNA-RuvA(4)-RuvB(12)-RuvC(2) complex forms which resolves the HJ.

The protein localises to the cytoplasm. In terms of biological role, the RuvA-RuvB-RuvC complex processes Holliday junction (HJ) DNA during genetic recombination and DNA repair, while the RuvA-RuvB complex plays an important role in the rescue of blocked DNA replication forks via replication fork reversal (RFR). RuvA specifically binds to HJ cruciform DNA, conferring on it an open structure. The RuvB hexamer acts as an ATP-dependent pump, pulling dsDNA into and through the RuvAB complex. HJ branch migration allows RuvC to scan DNA until it finds its consensus sequence, where it cleaves and resolves the cruciform DNA. This Beijerinckia indica subsp. indica (strain ATCC 9039 / DSM 1715 / NCIMB 8712) protein is Holliday junction branch migration complex subunit RuvA.